The primary structure comprises 478 residues: Protein nucleotidyltransferase YdiU (478 aa).

Residues glycine 84, glycine 86, arginine 87, lysine 107, aspartate 119, glycine 120, arginine 170, and arginine 177 each coordinate ATP. Residue aspartate 246 is the Proton acceptor of the active site. Residues asparagine 247 and aspartate 256 each contribute to the Mg(2+) site. Aspartate 256 serves as a coordination point for ATP.

Belongs to the SELO family. Mg(2+) serves as cofactor. The cofactor is Mn(2+).

The enzyme catalyses L-seryl-[protein] + ATP = 3-O-(5'-adenylyl)-L-seryl-[protein] + diphosphate. It carries out the reaction L-threonyl-[protein] + ATP = 3-O-(5'-adenylyl)-L-threonyl-[protein] + diphosphate. It catalyses the reaction L-tyrosyl-[protein] + ATP = O-(5'-adenylyl)-L-tyrosyl-[protein] + diphosphate. The catalysed reaction is L-histidyl-[protein] + UTP = N(tele)-(5'-uridylyl)-L-histidyl-[protein] + diphosphate. The enzyme catalyses L-seryl-[protein] + UTP = O-(5'-uridylyl)-L-seryl-[protein] + diphosphate. It carries out the reaction L-tyrosyl-[protein] + UTP = O-(5'-uridylyl)-L-tyrosyl-[protein] + diphosphate. Its function is as follows. Nucleotidyltransferase involved in the post-translational modification of proteins. It can catalyze the addition of adenosine monophosphate (AMP) or uridine monophosphate (UMP) to a protein, resulting in modifications known as AMPylation and UMPylation. The sequence is that of Protein nucleotidyltransferase YdiU from Shigella boydii serotype 18 (strain CDC 3083-94 / BS512).